A 418-amino-acid chain; its full sequence is NADH-quinone oxidoreductase subunit D (418 aa).

The protein belongs to the complex I 49 kDa subunit family. NDH-1 is composed of 14 different subunits. Subunits NuoB, C, D, E, F, and G constitute the peripheral sector of the complex.

Its subcellular location is the cell inner membrane. The enzyme catalyses a quinone + NADH + 5 H(+)(in) = a quinol + NAD(+) + 4 H(+)(out). NDH-1 shuttles electrons from NADH, via FMN and iron-sulfur (Fe-S) centers, to quinones in the respiratory chain. The immediate electron acceptor for the enzyme in this species is believed to be ubiquinone. Couples the redox reaction to proton translocation (for every two electrons transferred, four hydrogen ions are translocated across the cytoplasmic membrane), and thus conserves the redox energy in a proton gradient. The protein is NADH-quinone oxidoreductase subunit D of Bordetella avium (strain 197N).